Here is a 199-residue protein sequence, read N- to C-terminus: V-type ATP synthase subunit E (199 aa).

It belongs to the V-ATPase E subunit family.

Functionally, produces ATP from ADP in the presence of a proton gradient across the membrane. This chain is V-type ATP synthase subunit E, found in Borrelia garinii subsp. bavariensis (strain ATCC BAA-2496 / DSM 23469 / PBi) (Borreliella bavariensis).